Reading from the N-terminus, the 364-residue chain is Histidinol-phosphate aminotransferase 1 (364 aa).

An N6-(pyridoxal phosphate)lysine modification is found at Lys211.

Belongs to the class-II pyridoxal-phosphate-dependent aminotransferase family. Histidinol-phosphate aminotransferase subfamily. As to quaternary structure, homodimer. Pyridoxal 5'-phosphate is required as a cofactor.

It catalyses the reaction L-histidinol phosphate + 2-oxoglutarate = 3-(imidazol-4-yl)-2-oxopropyl phosphate + L-glutamate. The protein operates within amino-acid biosynthesis; L-histidine biosynthesis; L-histidine from 5-phospho-alpha-D-ribose 1-diphosphate: step 7/9. The polypeptide is Histidinol-phosphate aminotransferase 1 (Legionella pneumophila (strain Lens)).